Reading from the N-terminus, the 83-residue chain is Protein L83L (83 aa).

Residues methionine 1–proline 26 are disordered.

It belongs to the asfivirus L83L family. Interacts with host IL1B.

It localises to the host cytoplasm. Its function is as follows. May subvert the host innate immune response by interacting with host IL1B and interfering with its function. This is Protein L83L from Ornithodoros (relapsing fever ticks).